Here is a 696-residue protein sequence, read N- to C-terminus: DNA-directed RNA polymerase subunit beta N-terminal section (696 aa).

This sequence belongs to the RNA polymerase beta chain family. In plastids the minimal PEP RNA polymerase catalytic core is composed of four subunits: alpha, beta, beta', and beta''. When a (nuclear-encoded) sigma factor is associated with the core the holoenzyme is formed, which can initiate transcription.

Its subcellular location is the plastid. It localises to the chloroplast. The catalysed reaction is RNA(n) + a ribonucleoside 5'-triphosphate = RNA(n+1) + diphosphate. DNA-dependent RNA polymerase catalyzes the transcription of DNA into RNA using the four ribonucleoside triphosphates as substrates. The sequence is that of DNA-directed RNA polymerase subunit beta N-terminal section (rpoB1) from Stigeoclonium helveticum (Green alga).